Reading from the N-terminus, the 255-residue chain is Ribosome maturation factor RimP (255 aa).

A disordered region spans residues Leu-177–His-255. The span at Asp-186–Val-202 shows a compositional bias: acidic residues. Positions Pro-216–Val-230 are enriched in basic and acidic residues.

Belongs to the RimP family.

It localises to the cytoplasm. Required for maturation of 30S ribosomal subunits. This is Ribosome maturation factor RimP from Methylorubrum populi (strain ATCC BAA-705 / NCIMB 13946 / BJ001) (Methylobacterium populi).